Consider the following 221-residue polypeptide: Large ribosomal subunit protein uL3 (221 aa).

It belongs to the universal ribosomal protein uL3 family. In terms of assembly, part of the 50S ribosomal subunit. Forms a cluster with proteins L14 and L19.

Its function is as follows. One of the primary rRNA binding proteins, it binds directly near the 3'-end of the 23S rRNA, where it nucleates assembly of the 50S subunit. The protein is Large ribosomal subunit protein uL3 of Chlamydia abortus (strain DSM 27085 / S26/3) (Chlamydophila abortus).